Consider the following 265-residue polypeptide: Mlc titration factor A (265 aa).

4 residues coordinate Zn(2+): His111, His148, His152, and Glu211.

The protein belongs to the MtfA family. Interacts with Mlc. It depends on Zn(2+) as a cofactor.

It localises to the cytoplasm. Functionally, involved in the modulation of the activity of the glucose-phosphotransferase system (glucose-PTS). Interacts with the transcriptional repressor Mlc, preventing its interaction with DNA and leading to the modulation of expression of genes regulated by Mlc, including ptsG, which encodes the PTS system glucose-specific EIICB component. Its function is as follows. Shows zinc-dependent metallopeptidase activity. The polypeptide is Mlc titration factor A (Escherichia fergusonii).